The chain runs to 680 residues: Methionine--tRNA ligase (680 aa).

Positions 15-25 (PYANGSIHLGH) match the 'HIGH' region motif. The Zn(2+) site is built by Cys-146, Cys-149, Cys-159, and Cys-162. The 'KMSKS' region signature appears at 332-336 (KMSKS). Lys-335 contacts ATP. The tRNA-binding domain occupies 579–680 (DFAKVDMRIA…EGAQPGMRVM (102 aa)).

This sequence belongs to the class-I aminoacyl-tRNA synthetase family. MetG type 1 subfamily. As to quaternary structure, homodimer. The cofactor is Zn(2+).

The protein resides in the cytoplasm. The catalysed reaction is tRNA(Met) + L-methionine + ATP = L-methionyl-tRNA(Met) + AMP + diphosphate. Its function is as follows. Is required not only for elongation of protein synthesis but also for the initiation of all mRNA translation through initiator tRNA(fMet) aminoacylation. The chain is Methionine--tRNA ligase from Photobacterium profundum (strain SS9).